A 119-amino-acid polypeptide reads, in one-letter code: MSLKIRLTRGGAKKRPYYRIVVADSRSPRDGRFIEKVGVYDPMKPKDDPARVSLESEKIQAWLAKGAQPTDRVLRFLDAAGLAKRPARNNPKKAEPGQKAKERAAARAEKAGAGDDAAA.

The tract at residues 81-119 (GLAKRPARNNPKKAEPGQKAKERAAARAEKAGAGDDAAA) is disordered. Positions 92–113 (KKAEPGQKAKERAAARAEKAGA) are enriched in basic and acidic residues.

The protein belongs to the bacterial ribosomal protein bS16 family.

The polypeptide is Small ribosomal subunit protein bS16 (Methylobacterium sp. (strain 4-46)).